Reading from the N-terminus, the 401-residue chain is Alpha-(1,4)-fucosyltransferase (401 aa).

The Cytoplasmic portion of the chain corresponds to 1-4 (MPMR). The helical; Signal-anchor for type II membrane protein transmembrane segment at 5-27 (YLNAMAALLMMFFTLLILSFTGI) threads the bilayer. Over 28–401 (LEFPSASTSM…SRRGGKNAGV (374 aa)) the chain is Lumenal. Residue Asn85 is glycosylated (N-linked (GlcNAc...) asparagine).

Belongs to the glycosyltransferase 10 family. As to expression, present in root, stem, flower buds and green siliques.

It localises to the golgi apparatus. The protein resides in the golgi stack membrane. Its pathway is protein modification; protein glycosylation. In terms of biological role, may be involved in cell wall synthesis. Catalyzes alpha-1,4 glycosidic linkages and generates Lewis-a epitopes. The chain is Alpha-(1,4)-fucosyltransferase (FUT13) from Arabidopsis thaliana (Mouse-ear cress).